Reading from the N-terminus, the 905-residue chain is A disintegrin and metalloproteinase with thrombospondin motifs 8 (905 aa).

An N-terminal signal peptide occupies residues 1-28 (MLRDPTTTGWPPLLLLLLQLPPPPLVCG). The propeptide occupies 29-228 (APAGPGTGAQ…PFGSKTRSKR (200 aa)). Disordered stretches follow at residues 139–163 (PQGAGDSLDQPHRLQRWGPGQRRED) and 186–225 (NGQGQERSDNEEDRKQDKEGLLKETEDSRKVPPPFGSKTR). The segment covering 191–215 (ERSDNEEDRKQDKEGLLKETEDSRK) has biased composition (basic and acidic residues). One can recognise a Peptidase M12B domain in the interval 234–444 (RFVETLLVAD…GHGDCLLDAP (211 aa)). 10 disulfides stabilise this stretch: Cys309–Cys362, Cys338–Cys344, Cys356–Cys439, Cys394–Cys423, Cys478–Cys502, Cys487–Cys523, Cys517–Cys528, Cys554–Cys591, Cys558–Cys596, and Cys569–Cys581. Position 378 (His378) interacts with Zn(2+). The active site involves Glu379. Residues His382 and His388 each contribute to the Zn(2+) site. Residues Asn415, Asn480, and Asn506 are each glycosylated (N-linked (GlcNAc...) asparagine). A Disintegrin domain is found at 453–541 (GLPGHSTLYE…EDVENPKAVV (89 aa)). The TSP type-1 1 domain occupies 542 to 597 (DGDWGPWRPWGQCSRTCGGGIQFSNRECDNPMPQNGGRFCLGERVKYQSCNTEECP). The N-linked (GlcNAc...) asparagine glycan is linked to Asn615. The segment at 706–847 (RKISGSFTPF…RATTNIIQSL (142 aa)) is spacer. One can recognise a TSP type-1 2 domain in the interval 848 to 904 (PSAEWVLGDWSECPSTCRGSWQRRTVECRDPSGQASDTCDEALKPEDAKPCGSQPCP). The segment at 877-905 (DPSGQASDTCDEALKPEDAKPCGSQPCPL) is disordered.

It depends on Zn(2+) as a cofactor. Post-translationally, the precursor is cleaved by a furin endopeptidase. In terms of processing, glycosylated. Can be O-fucosylated by POFUT2 on a serine or a threonine residue found within the consensus sequence C1-X(2)-(S/T)-C2-G of the TSP type-1 repeat domains where C1 and C2 are the first and second cysteine residue of the repeat, respectively. Fucosylated repeats can then be further glycosylated by the addition of a beta-1,3-glucose residue by the glucosyltransferase, B3GALTL. Fucosylation mediates the efficient secretion of ADAMTS family members. Can also be C-glycosylated with one or two mannose molecules on tryptophan residues within the consensus sequence W-X-X-W of the TPRs, and N-glycosylated. These other glycosylations can also facilitate secretion. Expressed specifically in adult lung and heart and low expression during mouse development.

The protein localises to the secreted. It is found in the extracellular space. It localises to the extracellular matrix. Its function is as follows. Has anti-angiogenic properties. The chain is A disintegrin and metalloproteinase with thrombospondin motifs 8 (Adamts8) from Mus musculus (Mouse).